The chain runs to 224 residues: MATHSHPHSHTVPARPRRVRKPGEPLRIGVGGPVGSGKTALVAALCRQLRGELSLAVLTNDIYTTEDADFLRTHAVLPDDRIAAVQTGGCPHTAIRDDITANLDAIDELMAAHDALDLILVESGGDNLTATFSSGLVDAQIFVIDVAGGDKVPRKGGPGVTYSDLLVVNKTDLAALVGADLAVMARDADAVRDGRPTVLQSLTEDPAASDVVAWVRSQLAADGV.

The segment covering Met-1–Arg-20 has biased composition (basic residues). Residues Met-1–Pro-25 are disordered. A GTP-binding site is contributed by Gly-32–Thr-39.

Belongs to the SIMIBI class G3E GTPase family. UreG subfamily. Homodimer. UreD, UreF and UreG form a complex that acts as a GTP-hydrolysis-dependent molecular chaperone, activating the urease apoprotein by helping to assemble the nickel containing metallocenter of UreC. The UreE protein probably delivers the nickel.

It is found in the cytoplasm. Its function is as follows. Facilitates the functional incorporation of the urease nickel metallocenter. This process requires GTP hydrolysis, probably effectuated by UreG. The sequence is that of Urease accessory protein UreG from Mycobacterium bovis (strain ATCC BAA-935 / AF2122/97).